The sequence spans 172 residues: Ribosome maturation factor RimP (172 aa).

It belongs to the RimP family.

The protein localises to the cytoplasm. Functionally, required for maturation of 30S ribosomal subunits. In Nitratidesulfovibrio vulgaris (strain ATCC 29579 / DSM 644 / CCUG 34227 / NCIMB 8303 / VKM B-1760 / Hildenborough) (Desulfovibrio vulgaris), this protein is Ribosome maturation factor RimP.